Here is a 170-residue protein sequence, read N- to C-terminus: RNA pyrophosphohydrolase (170 aa).

The region spanning 8-158 is the Nudix hydrolase domain; that stretch reads PYRTCVGMML…KRPVYERVVK (151 aa). The Nudix box motif lies at 46-67; sequence GGVDPGEDTWLAAKRELYEETS.

The protein belongs to the Nudix hydrolase family. RppH subfamily. Requires a divalent metal cation as cofactor.

Functionally, accelerates the degradation of transcripts by removing pyrophosphate from the 5'-end of triphosphorylated RNA, leading to a more labile monophosphorylated state that can stimulate subsequent ribonuclease cleavage. This is RNA pyrophosphohydrolase from Nitrobacter winogradskyi (strain ATCC 25391 / DSM 10237 / CIP 104748 / NCIMB 11846 / Nb-255).